A 293-amino-acid polypeptide reads, in one-letter code: Ribosomal protein L11 methyltransferase (293 aa).

S-adenosyl-L-methionine is bound by residues Thr-145, Gly-166, Asp-188, and Asn-230.

It belongs to the methyltransferase superfamily. PrmA family.

It localises to the cytoplasm. The enzyme catalyses L-lysyl-[protein] + 3 S-adenosyl-L-methionine = N(6),N(6),N(6)-trimethyl-L-lysyl-[protein] + 3 S-adenosyl-L-homocysteine + 3 H(+). In terms of biological role, methylates ribosomal protein L11. The protein is Ribosomal protein L11 methyltransferase of Yersinia pseudotuberculosis serotype O:3 (strain YPIII).